Reading from the N-terminus, the 83-residue chain is Putative defensin-like protein 131 (83 aa).

A signal peptide spans 1–34 (MAKNRVLTIFYCTIYYCICFKYVLLGMVVEKTQG). Intrachain disulfides connect C37–C83, C46–C65, C51–C77, and C55–C79.

The protein belongs to the DEFL family.

It localises to the secreted. In Arabidopsis thaliana (Mouse-ear cress), this protein is Putative defensin-like protein 131 (LCR29).